Reading from the N-terminus, the 530-residue chain is Autoinducer-2 kinase (530 aa).

The protein belongs to the FGGY kinase family.

It is found in the cytoplasm. It catalyses the reaction (S)-4,5-dihydroxypentane-2,3-dione + ATP = (2S)-2-hydroxy-3,4-dioxopentyl phosphate + ADP + H(+). Functionally, catalyzes the phosphorylation of autoinducer-2 (AI-2) to phospho-AI-2, which subsequently inactivates the transcriptional regulator LsrR and leads to the transcription of the lsr operon. Phosphorylates the ring-open form of (S)-4,5-dihydroxypentane-2,3-dione (DPD), which is the precursor to all AI-2 signaling molecules, at the C5 position. The polypeptide is Autoinducer-2 kinase (Enterobacter sp. (strain 638)).